The chain runs to 230 residues: MSVRILVVDDDRAVRESLRRSLSFNGYSVELAHDGVEALDMIASDRPDALVLDVMMPRLDGLEVCRQLRGTGDDLPILVLTARDSVSERVAGLDAGADDYLPKPFALEELLARMRALLRRTKPEDAAESMAMRFSDLTLDPVTREVNRGQRRISLTRTEFALLEMLIANPRRVLTRSRILEEVWGFDFPTSGNALEVYVGYLRRKTEADGEPRLIHTVRGVGYVLRETPP.

Positions 4-118 (RILVVDDDRA…ELLARMRALL (115 aa)) constitute a Response regulatory domain. Position 48 is a 4-aspartylphosphate (Asp-48). The ompR/PhoB-type DNA-binding region spans 129–227 (SMAMRFSDLT…VRGVGYVLRE (99 aa)).

In terms of processing, phosphorylated and dephosphorylated by MprB.

It localises to the cytoplasm. Functionally, member of the two-component regulatory system MprB/MprA which contributes to maintaining a balance among several systems involved in stress resistance and is required for establishment and maintenance of persistent infection in the host. Functions as a transcriptional regulator that recognizes a 19-bp nucleotide motif comprizing two loosely conserved 8-bp direct DNA-binding motif repeats separated by a 3-bp spacer region. In Mycobacterium tuberculosis (strain ATCC 25177 / H37Ra), this protein is Response regulator MprA (mprA).